The following is a 231-amino-acid chain: MILIEHILGNVKKDPVWREKLKDATFDLLILDQREAQKSRCRKSSTQGLDLGISLDRNVVLADGDVLAWDEETNVAVVVQINLRDVMVIDLSELKSRSPDELIKTCFELGHALGNQHWKAVTKHNEVYVPLTVATTMMDSVMRTHGFQHLPFRFVKGAEILPLLTNSEARLLFGGAEDTDTHVHVASPLDEPHGSGLHIHGIHSHEEGHSHGDHDHDHSHSHGDHDHDHKH.

Residues 185-231 (VASPLDEPHGSGLHIHGIHSHEEGHSHGDHDHDHSHSHGDHDHDHKH) form a disordered region. Residues 203–231 (HSHEEGHSHGDHDHDHSHSHGDHDHDHKH) show a composition bias toward basic and acidic residues.

It belongs to the UreE family.

It is found in the cytoplasm. In terms of biological role, involved in urease metallocenter assembly. Binds nickel. Probably functions as a nickel donor during metallocenter assembly. The chain is Urease accessory protein UreE from Yersinia pestis bv. Antiqua (strain Antiqua).